The following is an 807-amino-acid chain: Phenylalanine--tRNA ligase beta subunit (807 aa).

A tRNA-binding domain is found at 39-153; sequence SARSQGVVVG…EIPAVGTPVA (115 aa). The region spanning 407–491 is the B5 domain; sequence RTPVPLQLRR…RLVGFDKFGS (85 aa). The Mg(2+) site is built by aspartate 469, aspartate 475, glutamate 478, and glutamate 479. The FDX-ACB domain maps to 713–806; sequence PTVPASERDL…LSKQFKAELR (94 aa).

This sequence belongs to the phenylalanyl-tRNA synthetase beta subunit family. Type 1 subfamily. In terms of assembly, tetramer of two alpha and two beta subunits. The cofactor is Mg(2+).

Its subcellular location is the cytoplasm. It catalyses the reaction tRNA(Phe) + L-phenylalanine + ATP = L-phenylalanyl-tRNA(Phe) + AMP + diphosphate + H(+). In Synechococcus sp. (strain CC9902), this protein is Phenylalanine--tRNA ligase beta subunit.